The sequence spans 206 residues: Superoxide dismutase [Mn] (206 aa).

Residues histidine 27, histidine 82, aspartate 168, and histidine 172 each coordinate Mn(2+).

The protein belongs to the iron/manganese superoxide dismutase family. Mn(2+) serves as cofactor.

The enzyme catalyses 2 superoxide + 2 H(+) = H2O2 + O2. Functionally, destroys superoxide anion radicals which are normally produced within the cells and which are toxic to biological systems. The protein is Superoxide dismutase [Mn] (sodA) of Lactococcus lactis subsp. lactis (strain IL1403) (Streptococcus lactis).